A 131-amino-acid polypeptide reads, in one-letter code: Sec-independent protein translocase protein TatB (131 aa).

The chain crosses the membrane as a helical span at residues 2 to 22 (LGSLSWEHMLVLVVVGLVVLG). The tract at residues 96–131 (AFDRPVNGAAAQPPPAPAPPPEPHRPGQTPFDADAT) is disordered. Positions 107–116 (QPPPAPAPPP) are enriched in pro residues.

Belongs to the TatB family. The Tat system comprises two distinct complexes: a TatABC complex, containing multiple copies of TatA, TatB and TatC subunits, and a separate TatA complex, containing only TatA subunits. Substrates initially bind to the TatABC complex, which probably triggers association of the separate TatA complex to form the active translocon.

Its subcellular location is the cell membrane. Part of the twin-arginine translocation (Tat) system that transports large folded proteins containing a characteristic twin-arginine motif in their signal peptide across membranes. Together with TatC, TatB is part of a receptor directly interacting with Tat signal peptides. TatB may form an oligomeric binding site that transiently accommodates folded Tat precursor proteins before their translocation. This is Sec-independent protein translocase protein TatB from Mycobacterium avium (strain 104).